We begin with the raw amino-acid sequence, 630 residues long: tRNA uridine 5-carboxymethylaminomethyl modification enzyme MnmG (630 aa).

G13 to G18 is an FAD binding site. Residue G273 to F287 coordinates NAD(+).

This sequence belongs to the MnmG family. Homodimer. Heterotetramer of two MnmE and two MnmG subunits. FAD is required as a cofactor.

It is found in the cytoplasm. In terms of biological role, NAD-binding protein involved in the addition of a carboxymethylaminomethyl (cmnm) group at the wobble position (U34) of certain tRNAs, forming tRNA-cmnm(5)s(2)U34. The chain is tRNA uridine 5-carboxymethylaminomethyl modification enzyme MnmG from Pseudomonas putida (strain ATCC 700007 / DSM 6899 / JCM 31910 / BCRC 17059 / LMG 24140 / F1).